Reading from the N-terminus, the 1118-residue chain is MLGILAKLFGTKSGRDIKKLQPLVERINEEFQKLHALDDNQLRAQTDKIKGIIDADLSGIDKQIKEHHDKIAANPDLSIDEKEVVFQAIDKLELERNKELEKVLEKVLPQAFAVVKDTARRWKENGKLTVTATPMDIELASRKKNVQIIGSTAEWSSKWLAAGTEVTWEMQHFDVQLIGGMVLHHGKISEMGTGEGKTLVATLPAYLNALARRGVHVVTVNDYLAKRDSEWMAPLFEFHGISVDCIDKYQPNSEERRKAYRADITYGTNNEFGFDYLRDNMATDKDDLVQRGHHYAMVDEVDSVLIDDARTPLIISGPVPKGDQHEFAELKPRIQRVLEEQKKLINTYLVEAKRYIAAGKEKEAGLELLRAHRGYPGYKPLIKQLSETGIKSILQKTENEYMAENNKRMPEVDLPLYFVIDEKHNQVDFTEKGVDFITGEQEDPTLFVLPDIGSELAKIEKDKSISDQERMEQTEKLLSDYSIKQERIHTLQQLLKAYTLFEKDTDYVIMDGKVKIVDEQTGRIMDGRRYSDGLHQALEAKENVRVEEATQTYATITLQNYFRMYHKLSGMTGTAETEEAEFQQIYNLDVVVVPTNRSIARLDEQDKVYKTTREKYNAVADEIVELTEKGRPVLVGTTSVDISELLSRMLKMRNIKHQVLNAKLHAKEADVVAEAGKPGTVTIATNMAGRGTDIKLTAEAKASGGLAIIGTERHESRRVDRQLRGRAGRQGDPGSSQFFVSLEDNLMRLFGSDRIAKFMDRMGYKEGEVIQHSMISNSIERAQKKVEENNFGQRKRLLEYDNVMNSQRVVIYKRRKNALYGERLKLDILNMIFDLCEDMVFGAYTTKNYDNFKLRSISVFGVIPDITEEVFNKATAETLVKSFYEEVLAHYEQKIKFVKEKTQPTFNELQLTRGETIENIVIPFTDGKRNINIIAPLKELAQSDSRALEQAIERYITLAVIDMHWKDHLREMDELKQSVQNAAYEQKDPLLVYKFEGFELFKKFVYTVNADIVSFLFKADIPKQDTVPVRELKQQPVQQPKYRETKDEAGSAFGGGNANQQVEEAVAPPKAEPLRSQKIANRNDKVSVQYMDGSVKRDIKYKAVEDDLLSNKCVLIEE.

Residues Gln176, 194–198 (GEGKT), and Asp693 contribute to the ATP site. The tract at residues 1034 to 1056 (QQPVQQPKYRETKDEAGSAFGGG) is disordered.

Belongs to the SecA family. Monomer and homodimer. Part of the essential Sec protein translocation apparatus which comprises SecA, SecYEG and auxiliary proteins SecDF. Other proteins may also be involved.

Its subcellular location is the cell inner membrane. The protein localises to the cytoplasm. It catalyses the reaction ATP + H2O + cellular proteinSide 1 = ADP + phosphate + cellular proteinSide 2.. Functionally, part of the Sec protein translocase complex. Interacts with the SecYEG preprotein conducting channel. Has a central role in coupling the hydrolysis of ATP to the transfer of proteins into and across the cell membrane, serving as an ATP-driven molecular motor driving the stepwise translocation of polypeptide chains across the membrane. The chain is Protein translocase subunit SecA from Cytophaga hutchinsonii (strain ATCC 33406 / DSM 1761 / CIP 103989 / NBRC 15051 / NCIMB 9469 / D465).